The following is an 87-amino-acid chain: DNA-directed RNA polymerase subunit omega (87 aa).

Belongs to the RNA polymerase subunit omega family. In terms of assembly, the RNAP catalytic core consists of 2 alpha, 1 beta, 1 beta' and 1 omega subunit. When a sigma factor is associated with the core the holoenzyme is formed, which can initiate transcription.

The catalysed reaction is RNA(n) + a ribonucleoside 5'-triphosphate = RNA(n+1) + diphosphate. Functionally, promotes RNA polymerase assembly. Latches the N- and C-terminal regions of the beta' subunit thereby facilitating its interaction with the beta and alpha subunits. In Pseudomonas entomophila (strain L48), this protein is DNA-directed RNA polymerase subunit omega.